The primary structure comprises 350 residues: Ketol-acid reductoisomerase (NADP(+)) (350 aa).

Positions 4–187 (VSITTDYSRM…GGARANIIKT (184 aa)) constitute a KARI N-terminal Rossmann domain. NADP(+) is bound by residues 30-33 (YGSQ), R53, T58, and 88-91 (DMVQ). H113 is a catalytic residue. G139 contributes to the NADP(+) binding site. The region spanning 188–333 (TFKEETETDL…KQLRAKMVWL (146 aa)) is the KARI C-terminal knotted domain. Residues D196, E200, E232, and E236 each contribute to the Mg(2+) site. Position 257 (S257) interacts with substrate.

This sequence belongs to the ketol-acid reductoisomerase family. Mg(2+) serves as cofactor.

It carries out the reaction (2R)-2,3-dihydroxy-3-methylbutanoate + NADP(+) = (2S)-2-acetolactate + NADPH + H(+). It catalyses the reaction (2R,3R)-2,3-dihydroxy-3-methylpentanoate + NADP(+) = (S)-2-ethyl-2-hydroxy-3-oxobutanoate + NADPH + H(+). The protein operates within amino-acid biosynthesis; L-isoleucine biosynthesis; L-isoleucine from 2-oxobutanoate: step 2/4. It functions in the pathway amino-acid biosynthesis; L-valine biosynthesis; L-valine from pyruvate: step 2/4. Involved in the biosynthesis of branched-chain amino acids (BCAA). Catalyzes an alkyl-migration followed by a ketol-acid reduction of (S)-2-acetolactate (S2AL) to yield (R)-2,3-dihydroxy-isovalerate. In the isomerase reaction, S2AL is rearranged via a Mg-dependent methyl migration to produce 3-hydroxy-3-methyl-2-ketobutyrate (HMKB). In the reductase reaction, this 2-ketoacid undergoes a metal-dependent reduction by NADPH to yield (R)-2,3-dihydroxy-isovalerate. The polypeptide is Ketol-acid reductoisomerase (NADP(+)) (Xylella fastidiosa (strain Temecula1 / ATCC 700964)).